The primary structure comprises 441 residues: Rho-associated protein kinase 1 (441 aa).

Residues 1-99 (NSKSQMDKDY…RLEQEVNEHK (99 aa)) are a coiled coil. The SHROOM3 binding stretch occupies residues 114–353 (EAKSVAMCEM…TLSRLEETNS (240 aa)). The region spanning 356–422 (TKDIELLRKE…LAEIMNRKDF (67 aa)) is the RhoBD domain. Residues 418 to 441 (NRKDFKIDRKKANTQDLRKKKKKK) adopt a coiled-coil conformation.

Belongs to the protein kinase superfamily. AGC Ser/Thr protein kinase family. Homodimer. Interacts with RHOA (activated by GTP), RHOB, RHOC, GEM, MYLC2B, RHOE, PPP1R12A, LIMK1, LIMK2, TSG101, CHORDC1, DAPK3, PFN1, PTEN and JIP3. Interacts with FHOD1 in a Src-dependent manner. Interacts with ITGB1BP1 (via N-terminus and PTB domain). Interacts with SHROOM3. Mg(2+) is required as a cofactor.

It is found in the cytoplasm. The protein localises to the golgi apparatus membrane. Its subcellular location is the cytoskeleton. It localises to the microtubule organizing center. The protein resides in the centrosome. It is found in the centriole. The protein localises to the cell projection. Its subcellular location is the bleb. It localises to the cell membrane. The protein resides in the lamellipodium. It is found in the ruffle. It carries out the reaction L-seryl-[protein] + ATP = O-phospho-L-seryl-[protein] + ADP + H(+). The catalysed reaction is L-threonyl-[protein] + ATP = O-phospho-L-threonyl-[protein] + ADP + H(+). With respect to regulation, activated by RHOA binding. Inhibited by Y-27632. Functionally, protein kinase which is a key regulator of the actin cytoskeleton and cell polarity. Involved in regulation of smooth muscle contraction, actin cytoskeleton organization, stress fiber and focal adhesion formation, neurite retraction, cell adhesion and motility via phosphorylation of DAPK3, GFAP, LIMK1, LIMK2, MYL9/MLC2, TPPP, PFN1 and PPP1R12A. Phosphorylates FHOD1 and acts synergistically with it to promote SRC-dependent non-apoptotic plasma membrane blebbing. Phosphorylates JIP3 and regulates the recruitment of JNK to JIP3 upon UVB-induced stress. Acts as a suppressor of inflammatory cell migration by regulating PTEN phosphorylation and stability. Acts as a negative regulator of VEGF-induced angiogenic endothelial cell activation. Required for centrosome positioning and centrosome-dependent exit from mitosis. Plays a role in terminal erythroid differentiation. Inhibits podocyte motility via regulation of actin cytoskeletal dynamics and phosphorylation of CFL1. Promotes keratinocyte terminal differentiation. Involved in osteoblast compaction through the fibronectin fibrillogenesis cell-mediated matrix assembly process, essential for osteoblast mineralization. May regulate closure of the eyelids and ventral body wall by inducing the assembly of actomyosin bundles. This chain is Rho-associated protein kinase 1 (ROCK1), found in Bos taurus (Bovine).